The sequence spans 277 residues: Putative phosphoenolpyruvate synthase regulatory protein (277 aa).

Glycine 157–threonine 164 is a binding site for ADP.

Belongs to the pyruvate, phosphate/water dikinase regulatory protein family. PSRP subfamily.

It catalyses the reaction [pyruvate, water dikinase] + ADP = [pyruvate, water dikinase]-phosphate + AMP + H(+). The catalysed reaction is [pyruvate, water dikinase]-phosphate + phosphate + H(+) = [pyruvate, water dikinase] + diphosphate. In terms of biological role, bifunctional serine/threonine kinase and phosphorylase involved in the regulation of the phosphoenolpyruvate synthase (PEPS) by catalyzing its phosphorylation/dephosphorylation. The chain is Putative phosphoenolpyruvate synthase regulatory protein from Cronobacter sakazakii (strain ATCC BAA-894) (Enterobacter sakazakii).